Reading from the N-terminus, the 288-residue chain is MLIAVSSADRLDLWQAIVLGFVQGATEFLPISSTAHLKVVPVVLGWGDPGVAFTAVIQLGSIVAVLSYFRQDLTYVLRGLVSAVRRQDFRSEPAQMGLGILFGTIPILIGGLLIKRFIPDYDNSPLRSLAAIAIVSIVMGLLLGIAEQLSKHQRDLSQLRLADGLWMGFAQALALIPGVSRSGSTLTAGLFQGLKRDTAARFSFLLGIPAITIAGLVELKDLLEAGIDGSSLGVLAIGTLSSLIFSWLAIAWLLRFLRTHNTWSFVVYRIIFGGVILTAIATGTLQNI.

8 helical membrane-spanning segments follow: residues 11–31 (LDLWQAIVLGFVQGATEFLPI), 49–69 (PGVAFTAVIQLGSIVAVLSYF), 94–114 (AQMGLGILFGTIPILIGGLLI), 129–149 (LAAIAIVSIVMGLLLGIAEQL), 159–179 (LRLADGLWMGFAQALALIPGV), 199–219 (AARFSFLLGIPAITIAGLVEL), 234–254 (VLAIGTLSSLIFSWLAIAWLL), and 265–285 (FVVYRIIFGGVILTAIATGTL).

It belongs to the UppP family.

It localises to the cell inner membrane. The enzyme catalyses di-trans,octa-cis-undecaprenyl diphosphate + H2O = di-trans,octa-cis-undecaprenyl phosphate + phosphate + H(+). In terms of biological role, catalyzes the dephosphorylation of undecaprenyl diphosphate (UPP). Confers resistance to bacitracin. The polypeptide is Undecaprenyl-diphosphatase (Synechococcus elongatus (strain ATCC 33912 / PCC 7942 / FACHB-805) (Anacystis nidulans R2)).